A 72-amino-acid chain; its full sequence is Conotoxin im23a (72 aa).

An N-terminal signal peptide occupies residues 1–22 (MIMRMTLTLFVLVVMTAASASG). Residues 23 to 28 (DALTEA) constitute a propeptide that is removed on maturation. 3 disulfide bridges follow: cysteine 34-cysteine 41, cysteine 45-cysteine 55, and cysteine 56-cysteine 71.

It belongs to the conotoxin K superfamily. As to expression, expressed by the venom duct.

Its subcellular location is the secreted. Its function is as follows. Neurotoxin that induces excitatory symptoms in mice following intracranial administration. No symptoms are observed after intraperitoneal and intravenous (tail vein) injections. In Conus imperialis (Imperial cone), this protein is Conotoxin im23a.